Consider the following 185-residue polypeptide: Photosystem I assembly protein Ycf4 (185 aa).

The next 2 helical transmembrane spans lie at 20 to 40 (GNFF…SVGA) and 57 to 77 (ILFF…LFIS).

This sequence belongs to the Ycf4 family.

It is found in the plastid. Its subcellular location is the chloroplast thylakoid membrane. Seems to be required for the assembly of the photosystem I complex. The protein is Photosystem I assembly protein Ycf4 of Lolium perenne (Perennial ryegrass).